The primary structure comprises 106 residues: Probable insulin-like peptide beta-type 2 (106 aa).

The N-terminal stretch at Met1 to Ala15 is a signal peptide. Positions Thr16 to Arg56 are excised as a propeptide. Disulfide bonds link Cys58/Cys86, Cys70/Cys99, Cys73/Cys100, and Cys85/Cys90.

This sequence belongs to the insulin family.

It localises to the secreted. The polypeptide is Probable insulin-like peptide beta-type 2 (ins-2) (Caenorhabditis elegans).